We begin with the raw amino-acid sequence, 646 residues long: MAPAGLLQTSLIWVAYGVAVALVLLVSVITTLTWQTPHERSIAVSIVSIISLTALLATVFLLPVDIALVSSTASAHLGAKKDWATPGRVDGILLTLKIVYYTLYTLDALLCLIVIPFTYFWFEEYDEVEEEEGTSSAAARIWRALKYTLGFVFLVVILFLIGFFVPAAGNNPGKHMDLDYFKRLLAANNGEKALTFGVGLLITLGTLLYILYTSAGLALLPVSFIKSAPSISAPQLSATTASALEHNRELQRQLEMRNSGRPEGMSQKDRREMDALLREERTLVRRERLAAEARGDNRSKIYRAWTKVEAVFRPLKLLGGIFLLLLAILIWVSMLITGIDKAANSICKQHCGYILGHLNVFQPINWIFVQSAKAFPVDYILMALLVLLFFSSSITGLATIGIRFLWVRIFQLKKGRTAPQALLIATVLLGPHDPRHQLRGRHARGAAVRHLRHADLLRQPAAATRASSPTAASTATWCAPAPRPSASPAAIGRLHADRHVHLPQPRPPSNWPRLRRPSTSGPSSSSSPSSSSSSSPASSRTPRLNLSELDEEAEVDERGGPAGPAPAAALARPGAISPAAPRRTPPRRARRVMARRLGTRMGVGRARGVKLNGGAATENDKKEKKNGTWVWAWVWEWEWQTDWLAE.

The next 5 membrane-spanning stretches (helical) occupy residues 11–31 (LIWVAYGVAVALVLLVSVITT), 42–62 (IAVSIVSIISLTALLATVFLL), 102–122 (TLYTLDALLCLIVIPFTYFWF), 149–169 (LGFVFLVVILFLIGFFVPAAG), and 193–213 (ALTFGVGLLITLGTLLYILYT). The N-linked (GlcNAc...) asparagine glycan is linked to Asn297. 2 consecutive transmembrane segments (helical) span residues 317-337 (LLGGIFLLLLAILIWVSMLIT) and 380-400 (ILMALLVLLFFSSSITGLATI). 2 disordered regions span residues 459 to 588 (QPAA…PPRR) and 603 to 623 (VGRARGVKLNGGAATENDKKE). 2 stretches are compositionally biased toward low complexity: residues 460-490 (PAAATRASSPTAASTATWCAPAPRPSASPAA) and 517-543 (PSTSGPSSSSSPSSSSSSSPASSRTPR). N-linked (GlcNAc...) asparagine glycosylation occurs at Asn545. The span at 565 to 582 (APAAALARPGAISPAAPR) shows a compositional bias: low complexity. An N-linked (GlcNAc...) asparagine glycan is attached at Asn626.

This sequence belongs to the LIMR family. LMBRD1 subfamily.

The protein resides in the lysosome membrane. Functionally, probable lysosomal cobalamin transporter. Required to export cobalamin from lysosomes allowing its conversion to cofactors. This Chaetomium globosum (strain ATCC 6205 / CBS 148.51 / DSM 1962 / NBRC 6347 / NRRL 1970) (Soil fungus) protein is Probable lysosomal cobalamin transporter.